The sequence spans 84 residues: Large ribosomal subunit protein bL27 (84 aa).

Positions 1 to 22 are disordered; it reads MAHKKGGGSTKNGRDSNPKYLG.

The protein belongs to the bacterial ribosomal protein bL27 family.

The chain is Large ribosomal subunit protein bL27 from Prosthecochloris aestuarii (strain DSM 271 / SK 413).